The following is a 227-amino-acid chain: Probable methylthioribulose-1-phosphate dehydratase (227 aa).

Cys-87 serves as a coordination point for substrate. Zn(2+) is bound by residues His-105 and His-107. Catalysis depends on Glu-129, which acts as the Proton donor/acceptor. His-185 is a Zn(2+) binding site.

Belongs to the aldolase class II family. MtnB subfamily. Zn(2+) serves as cofactor.

It is found in the cytoplasm. It catalyses the reaction 5-(methylsulfanyl)-D-ribulose 1-phosphate = 5-methylsulfanyl-2,3-dioxopentyl phosphate + H2O. Its pathway is amino-acid biosynthesis; L-methionine biosynthesis via salvage pathway; L-methionine from S-methyl-5-thio-alpha-D-ribose 1-phosphate: step 2/6. Its function is as follows. Catalyzes the dehydration of methylthioribulose-1-phosphate (MTRu-1-P) into 2,3-diketo-5-methylthiopentyl-1-phosphate (DK-MTP-1-P). This is Probable methylthioribulose-1-phosphate dehydratase from Drosophila ananassae (Fruit fly).